Here is a 170-residue protein sequence, read N- to C-terminus: Lipoprotein signal peptidase (170 aa).

Helical transmembrane passes span leucine 11–phenylalanine 31, isoleucine 41–serine 61, tryptophan 69–leucine 89, and asparagine 95–tyrosine 115. Catalysis depends on residues aspartate 125 and aspartate 144. A helical membrane pass occupies residues tyrosine 136–leucine 156.

This sequence belongs to the peptidase A8 family.

The protein resides in the cell inner membrane. The enzyme catalyses Release of signal peptides from bacterial membrane prolipoproteins. Hydrolyzes -Xaa-Yaa-Zaa-|-(S,diacylglyceryl)Cys-, in which Xaa is hydrophobic (preferably Leu), and Yaa (Ala or Ser) and Zaa (Gly or Ala) have small, neutral side chains.. The protein operates within protein modification; lipoprotein biosynthesis (signal peptide cleavage). Functionally, this protein specifically catalyzes the removal of signal peptides from prolipoproteins. The polypeptide is Lipoprotein signal peptidase (Pseudomonas fluorescens (strain ATCC BAA-477 / NRRL B-23932 / Pf-5)).